The primary structure comprises 136 residues: Histone H3, embryonic (136 aa).

The interval 1–43 (MARTKQTARKSTGGKAPRKQLATKAARKSAPATGGVKKPHRYR) is disordered. The residue at position 5 (lysine 5) is an N6-methylated lysine. At lysine 10 the chain carries N6-acetyllysine; alternate. An N6-methylated lysine; alternate modification is found at lysine 10. Serine 11 carries the phosphoserine modification. 2 positions are modified to N6-acetyllysine: lysine 15 and lysine 24. Lysine 28, lysine 37, and lysine 80 each carry N6-methylated lysine.

The protein belongs to the histone H3 family. As to quaternary structure, the nucleosome is a histone octamer containing two molecules each of H2A, H2B, H3 and H4 assembled in one H3-H4 heterotetramer and two H2A-H2B heterodimers. The octamer wraps approximately 147 bp of DNA. Acetylation is generally linked to gene activation. Post-translationally, methylation at Lys-5 is linked to gene activation. Methylation at Lys-10 is linked to gene repression.

It localises to the nucleus. The protein resides in the chromosome. Functionally, core component of nucleosome. Nucleosomes wrap and compact DNA into chromatin, limiting DNA accessibility to the cellular machineries which require DNA as a template. Histones thereby play a central role in transcription regulation, DNA repair, DNA replication and chromosomal stability. DNA accessibility is regulated via a complex set of post-translational modifications of histones, also called histone code, and nucleosome remodeling. The polypeptide is Histone H3, embryonic (Paracentrotus lividus (Common sea urchin)).